Here is a 671-residue protein sequence, read N- to C-terminus: Acetyl-coenzyme A synthetase (671 aa).

Residues 1–21 (MPTASASESSSNQPESSNASG) form a disordered region. Residues 221 to 224 (RRGK), T339, and N363 each bind CoA. ATP is bound by residues 415-417 (GEG), 439-444 (DTWWQT), D528, and R543. CoA is bound at residue S551. R554 is an ATP binding site. 3 residues coordinate Mg(2+): V565, H567, and V570. R611 is a binding site for CoA. Position 636 is an N6-acetyllysine (K636).

This sequence belongs to the ATP-dependent AMP-binding enzyme family. It depends on Mg(2+) as a cofactor. Post-translationally, acetylated. Deacetylation by the SIR2-homolog deacetylase activates the enzyme.

It carries out the reaction acetate + ATP + CoA = acetyl-CoA + AMP + diphosphate. Functionally, catalyzes the conversion of acetate into acetyl-CoA (AcCoA), an essential intermediate at the junction of anabolic and catabolic pathways. AcsA undergoes a two-step reaction. In the first half reaction, AcsA combines acetate with ATP to form acetyl-adenylate (AcAMP) intermediate. In the second half reaction, it can then transfer the acetyl group from AcAMP to the sulfhydryl group of CoA, forming the product AcCoA. In Rhodopirellula baltica (strain DSM 10527 / NCIMB 13988 / SH1), this protein is Acetyl-coenzyme A synthetase.